Consider the following 254-residue polypeptide: Nickel import ATP-binding protein NikD (254 aa).

The ABC transporter domain maps to 2–241; it reads PQQIELRNIA…PKHAVTRSLV (240 aa). 36 to 43 contacts ATP; that stretch reads GGSGSGKS.

It belongs to the ABC transporter superfamily. Nickel importer (TC 3.A.1.5.3) family. The complex is composed of two ATP-binding proteins (NikD and NikE), two transmembrane proteins (NikB and NikC) and a solute-binding protein (NikA).

It localises to the cell inner membrane. The enzyme catalyses Ni(2+)(out) + ATP + H2O = Ni(2+)(in) + ADP + phosphate + H(+). Functionally, part of the ABC transporter complex NikABCDE involved in nickel import. Responsible for energy coupling to the transport system. This is Nickel import ATP-binding protein NikD from Shigella sonnei (strain Ss046).